The chain runs to 275 residues: Shikimate dehydrogenase (NADP(+)) (275 aa).

Residues 15–17 (SKS) and Thr62 contribute to the shikimate site. Lys66 acts as the Proton acceptor in catalysis. Glu78 lines the NADP(+) pocket. Asn87 and Asp102 together coordinate shikimate. NADP(+) contacts are provided by residues 127–131 (GAGGA), 151–156 (NRTPQK), and Met215. Residue Tyr217 participates in shikimate binding. NADP(+) is bound at residue Gly239.

It belongs to the shikimate dehydrogenase family. As to quaternary structure, homodimer.

It catalyses the reaction shikimate + NADP(+) = 3-dehydroshikimate + NADPH + H(+). Its pathway is metabolic intermediate biosynthesis; chorismate biosynthesis; chorismate from D-erythrose 4-phosphate and phosphoenolpyruvate: step 4/7. Its function is as follows. Involved in the biosynthesis of the chorismate, which leads to the biosynthesis of aromatic amino acids. Catalyzes the reversible NADPH linked reduction of 3-dehydroshikimate (DHSA) to yield shikimate (SA). The polypeptide is Shikimate dehydrogenase (NADP(+)) (Nitrosospira multiformis (strain ATCC 25196 / NCIMB 11849 / C 71)).